Consider the following 1071-residue polypeptide: Myosin IF heavy chain (1071 aa).

Positions 40–736 constitute a Myosin motor domain; the sequence is VGLTDMCFLE…TLFHFEELRQ (697 aa). 134–141 serves as a coordination point for ATP; that stretch reads GESGSGKT. An actin-binding region spans residues 610–632; it reads INDLIGKLNTCQPHYIRCIKSNE. One can recognise an IQ domain in the interval 739–768; sequence LPSIVITIQRVWRGYKVRKWYKQELQRLRE. The 200-residue stretch at 870-1069 folds into the TH1 domain; sequence SRKKEWDCRR…KGNTAIVYYN (200 aa).

Belongs to the TRAFAC class myosin-kinesin ATPase superfamily. Myosin family. In terms of assembly, myosin I heavy chain is single-headed. Dimer of a heavy and a light chain. Inability to self-assemble into filaments.

Functionally, myosin is a protein that binds to actin and has ATPase activity that is activated by actin. This chain is Myosin IF heavy chain (myoF), found in Dictyostelium discoideum (Social amoeba).